The following is a 193-amino-acid chain: Dihydrofolate reductase (193 aa).

Positions 1-193 (MIKLVFRYSP…VTTLTESVYK (193 aa)) constitute a DHFR domain. NADP(+)-binding positions include Arg-7, 22 to 27 (FGLGDG), 52 to 55 (GAKT), and 73 to 77 (DLARD).

The protein belongs to the dihydrofolate reductase family.

It catalyses the reaction (6S)-5,6,7,8-tetrahydrofolate + NADP(+) = 7,8-dihydrofolate + NADPH + H(+). Its pathway is cofactor biosynthesis; tetrahydrofolate biosynthesis; 5,6,7,8-tetrahydrofolate from 7,8-dihydrofolate: step 1/1. Functionally, key enzyme in folate metabolism. Catalyzes an essential reaction for de novo glycine and purine synthesis, and for DNA precursor synthesis. This is Dihydrofolate reductase (frd) from Escherichia coli (Bacteriophage T4).